Here is a 598-residue protein sequence, read N- to C-terminus: UvrABC system protein C (598 aa).

The region spanning 14 to 91 (DSPGCYLHKD…IQKNMPKYNI (78 aa)) is the GIY-YIG domain. Positions 196-231 (DKIIEDLRSKMLAASEEMAFERAAEYRDLISGIATM) constitute a UVR domain.

It belongs to the UvrC family. Interacts with UvrB in an incision complex.

It is found in the cytoplasm. The UvrABC repair system catalyzes the recognition and processing of DNA lesions. UvrC both incises the 5' and 3' sides of the lesion. The N-terminal half is responsible for the 3' incision and the C-terminal half is responsible for the 5' incision. The polypeptide is UvrABC system protein C (Streptococcus pyogenes serotype M3 (strain ATCC BAA-595 / MGAS315)).